A 490-amino-acid polypeptide reads, in one-letter code: Pleckstrin homology domain-containing family O member 2 (490 aa).

The 102-residue stretch at 18 to 119 (MVDKAGWIKK…WIKALNEGIN (102 aa)) folds into the PH domain. Ser-164 and Ser-167 each carry phosphoserine. The segment at 173–402 (LDLDVPDSGP…DLLGEGPRHP (230 aa)) is disordered. Over residues 230-243 (APTPVSASSEVSPE) the composition is skewed to low complexity. At Thr-232 the chain carries Phosphothreonine. A phosphoserine mark is found at Ser-235, Ser-237, and Ser-238. The segment covering 244 to 257 (SQEDSETPAEEDSG) has biased composition (acidic residues). Position 273 is a phosphoserine (Ser-273). Positions 277–297 (PSPQEAPAAESAEPSQAPCSE) are enriched in low complexity. Phosphothreonine is present on residues Thr-298 and Thr-311. A phosphoserine mark is found at Ser-390 and Ser-468. Residues 439–481 (SAETLLSQAVEQLRQATQVLQEMRDLGELSQEAPGLREKRKEL) adopt a coiled-coil conformation.

The sequence is that of Pleckstrin homology domain-containing family O member 2 (PLEKHO2) from Homo sapiens (Human).